The chain runs to 288 residues: T-cell-interacting, activating receptor on myeloid cells protein 1 (288 aa).

The N-terminal stretch at 1–16 is a signal peptide; it reads MISRLLSLLCLRLCVG. At 17–258 the chain is on the extracellular side; sequence QTDIPENGSP…EGYTVDNLIR (242 aa). 2 Ig-like C2-type domains span residues 27–113 and 124–217; these read PKPS…HPSN and PQPS…LEIS. 2 cysteine pairs are disulfide-bonded: C49–C97 and C146–C196. N74 and N185 each carry an N-linked (GlcNAc...) asparagine glycan. The chain crosses the membrane as a helical span at residues 259–279; the sequence is VGVAAAILLIVGGFLVEAWHS. The Cytoplasmic portion of the chain corresponds to 280–288; it reads ERLSPNKPW.

As to quaternary structure, interacts with Fc receptor gamma chain FCER1G. Post-translationally, N-glycosylated. In terms of tissue distribution, expressed in lung, uterus, lymph nodes, spleen, thymus and bone marrow. Expressed in bone marrow CD11b(+)Gr-1(+) granulocyte precursors and mature neutrophils.

It is found in the cell membrane. In terms of biological role, may act as receptor. Negatively regulates TCR-mediated CD4(+) T cell proliferation and activation, possibly by binding an unknown ligand on the T cell surface. Enhances Toll-like receptor-mediated production of pro-inflammatory cytokines by macrophages and neutrophils. In Mus musculus (Mouse), this protein is T-cell-interacting, activating receptor on myeloid cells protein 1 (Tarm1).